The primary structure comprises 239 residues: Probable transcriptional regulatory protein BCAH187_A0615 (239 aa).

The protein belongs to the TACO1 family. YeeN subfamily.

Its subcellular location is the cytoplasm. In Bacillus cereus (strain AH187), this protein is Probable transcriptional regulatory protein BCAH187_A0615.